Here is a 161-residue protein sequence, read N- to C-terminus: GTP-dependent dephospho-CoA kinase (161 aa).

Positions 40, 41, 42, 59, and 112 each coordinate GTP.

The protein belongs to the GTP-dependent DPCK family.

The enzyme catalyses 3'-dephospho-CoA + GTP = GDP + CoA + H(+). Its pathway is cofactor biosynthesis; coenzyme A biosynthesis. Functionally, catalyzes the GTP-dependent phosphorylation of the 3'-hydroxyl group of dephosphocoenzyme A to form coenzyme A (CoA). The sequence is that of GTP-dependent dephospho-CoA kinase from Methanoculleus marisnigri (strain ATCC 35101 / DSM 1498 / JR1).